We begin with the raw amino-acid sequence, 323 residues long: Fructose-bisphosphate aldolase (323 aa).

Residue Ser-50 participates in beta-D-fructose 1,6-bisphosphate binding. Asp-83 serves as the catalytic Proton donor. Residues His-84 and His-178 each contribute to the Zn(2+) site. Beta-D-fructose 1,6-bisphosphate is bound by residues His-178, Gly-179, and Lys-182. His-210 contacts Zn(2+). Residues Gly-211, Ser-213, Asn-253, Asp-255, Ser-256, Arg-259, and Arg-280 each contribute to the beta-D-fructose 1,6-bisphosphate site.

It belongs to the class II fructose-bisphosphate aldolase family. In terms of assembly, homodimer. The cofactor is Zn(2+).

The enzyme catalyses beta-D-fructose 1,6-bisphosphate = D-glyceraldehyde 3-phosphate + dihydroxyacetone phosphate. Its pathway is carbohydrate degradation; glycolysis; D-glyceraldehyde 3-phosphate and glycerone phosphate from D-glucose: step 4/4. In terms of biological role, plays a key role in glycolysis by catalyzing the cleavage of fructose 1,6-bisphosphate into dihydroxyacetone phosphate and glyceraldehyde 3-phosphate. Does not cleave D-tagatose-1,6-bisphosphate. This chain is Fructose-bisphosphate aldolase, found in Giardia intestinalis (strain ATCC 50803 / WB clone C6) (Giardia lamblia).